The chain runs to 234 residues: Ammonia monooxygenase gamma subunit (234 aa).

A signal peptide spans 1–20 (MRMIKFLLLAILLAPFVAHS). The Cytochrome c domain maps to 38–193 (ESLQRGAKGF…RFVADLVNYM (156 aa)). Heme c-binding residues include Cys-51, Cys-54, and His-55. A helical membrane pass occupies residues 206-226 (ELGITVLLFLFGMLGLTYLLK).

Belongs to the cytochrome c family. The soluble ammonia monooxygenase is a nonamer composed of three alpha subunits (AmoA), three beta subunits (AmoB) and three gamma subunits (Cytochrome c1 PetC). The cofactor is heme c.

It localises to the cell membrane. It is found in the cytoplasm. In terms of biological role, part of the ammonia monooxygenase complex, which catalyzes the oxidation of ammonia to hydroxylamine, the first reaction in the process of ammonia oxidation to nitrite. In Nitrosomonas europaea (strain ATCC 19718 / CIP 103999 / KCTC 2705 / NBRC 14298), this protein is Ammonia monooxygenase gamma subunit.